The following is a 112-amino-acid chain: MKKKTGQLYEGAYVFSVTLSEDARRKALEKVTSGITNYGGEVLKIHDQGRKKLAYTIRGAREGYYYFIYFTVAPEAISELWREYHLNEDLLRFMTLKASAVKEVLEFATLPE.

The protein belongs to the bacterial ribosomal protein bS6 family.

Binds together with bS18 to 16S ribosomal RNA. The chain is Small ribosomal subunit protein bS6 (rpsF) from Chlamydia muridarum (strain MoPn / Nigg).